The chain runs to 806 residues: Phenylalanine--tRNA ligase beta subunit (806 aa).

Positions 40–155 constitute a tRNA-binding domain; it reads NKGVKGVVVG…SDAEVGADAL (116 aa). One can recognise a B5 domain in the interval 409–484; that stretch reads VQERTVSVTA…RLYGYDHIPV (76 aa). Residues aspartate 462, aspartate 468, glutamate 471, and glutamate 472 each coordinate Mg(2+). The region spanning 712–805 is the FDX-ACB domain; the sequence is PRFPSMTRDM…VEEKFGAELR (94 aa).

The protein belongs to the phenylalanyl-tRNA synthetase beta subunit family. Type 1 subfamily. Tetramer of two alpha and two beta subunits. Mg(2+) serves as cofactor.

It is found in the cytoplasm. It carries out the reaction tRNA(Phe) + L-phenylalanine + ATP = L-phenylalanyl-tRNA(Phe) + AMP + diphosphate + H(+). The polypeptide is Phenylalanine--tRNA ligase beta subunit (Bacillus cereus (strain ATCC 14579 / DSM 31 / CCUG 7414 / JCM 2152 / NBRC 15305 / NCIMB 9373 / NCTC 2599 / NRRL B-3711)).